The following is a 129-amino-acid chain: Cytochrome c-type protein SHP (129 aa).

A signal peptide spans Met-1–Ala-17. Heme c is bound by residues Cys-60, Cys-63, and His-64. Cys-106 and Cys-114 are joined by a disulfide.

Post-translationally, binds 1 heme c group covalently per subunit.

High-spin cytochrome. Transiently bind oxygen during autoxidation, which occurs with a half-life of 3 minutes with a 4-fold excess of O(2). Also binds carbon monoxide, azide and cyanide. This chain is Cytochrome c-type protein SHP (shp), found in Cereibacter sphaeroides (strain ATCC 17023 / DSM 158 / JCM 6121 / CCUG 31486 / LMG 2827 / NBRC 12203 / NCIMB 8253 / ATH 2.4.1.) (Rhodobacter sphaeroides).